The following is a 295-amino-acid chain: 4-diphosphocytidyl-2-C-methyl-D-erythritol kinase (295 aa).

The active site involves lysine 25. ATP is bound at residue 108 to 118 (PMGSGLGGGSS). Aspartate 150 is an active-site residue.

This sequence belongs to the GHMP kinase family. IspE subfamily.

It carries out the reaction 4-CDP-2-C-methyl-D-erythritol + ATP = 4-CDP-2-C-methyl-D-erythritol 2-phosphate + ADP + H(+). It participates in isoprenoid biosynthesis; isopentenyl diphosphate biosynthesis via DXP pathway; isopentenyl diphosphate from 1-deoxy-D-xylulose 5-phosphate: step 3/6. Functionally, catalyzes the phosphorylation of the position 2 hydroxy group of 4-diphosphocytidyl-2C-methyl-D-erythritol. This is 4-diphosphocytidyl-2-C-methyl-D-erythritol kinase from Pasteurella multocida (strain Pm70).